The primary structure comprises 168 residues: 3-isopropylmalate dehydratase small subunit (168 aa).

This sequence belongs to the LeuD family. LeuD type 2 subfamily. Heterodimer of LeuC and LeuD.

The enzyme catalyses (2R,3S)-3-isopropylmalate = (2S)-2-isopropylmalate. Its pathway is amino-acid biosynthesis; L-leucine biosynthesis; L-leucine from 3-methyl-2-oxobutanoate: step 2/4. Its function is as follows. Catalyzes the isomerization between 2-isopropylmalate and 3-isopropylmalate, via the formation of 2-isopropylmaleate. This chain is 3-isopropylmalate dehydratase small subunit, found in Thermodesulfovibrio yellowstonii (strain ATCC 51303 / DSM 11347 / YP87).